A 909-amino-acid polypeptide reads, in one-letter code: MERAMEQLNRLTRSLRRARTVELPEDNETAVYTLMPMVMADQHRSVSELLSNSKFDVNYAFGRVKRSLLHIAANCGSVECLVLLLKKGANPNYQDISGCTPLHLAARNGQKKCMSKLLEYSADVNICNNEGLTAIHWLAVNGRTELLHDLVQHVTDVDVEDAMGQTALHVACQNGHKTTVQCLLDSGADINRPNVSGATPLYFACSHGQRDTAQILLLRGAKYLPDKNGVTPLDLCVQGGYGQTCEVLIQYHPRLFQTIVQMTQNEDLRENMLRQVLQHLSQQSESQYLKILTGLAEVATTNGHKLLSLSSNYDAQMKSLLRIVRIFCHVFRIGPSSPSNGIDMGYNGNKTPRSQVFKPLELLWHSLDEWLVLIATELMKNKEDSTDITSILLKQKGQDQEAPSLSAFEPPGPGSYESLPPGPGDSKPEVLAGEQEASADCQDVISVTANRLSAVIQAFYMCCSCQMPPGMTSPRFIEFVCKHDEVLKCFVNRNPKIIFDHFHFLLECPELMSRFMHIIKAQPFKDRCEWFYEHLHSGQPDSDMVHRPVSENDILLVHRDSIFRSSCEIVSKANCAKLKQGIAVRFHGEEGMGQGVVREWFDILSNEIVNPDYALFTQSADGTTFQPNSNSYVNPDHLNYFRFAGQILGLALNHRQLVNIYFTRSFYKHILGIPVNYQDVASIDPEYAKNLQWILDNDISDLGLELTFSVETDVFGAMEEVPLKPGGGSILVTQNNKAEYVQLVTELRMTRAIQPQINAFLQGFHMFIPPSLIQLFDEYELELLLSGMPEIDVNDWIKNTEYTSGYEREDPVIQWFWEVVEDITQEERVLLLQFVTGSSRVPHGGFANIMGGSGLQNFTIAAVPYTPNLLPTSSTCINMLKLPEYPSKEILKDRLLVALHCGSYGYTMA.

An N-terminal helix important for homodimerization region spans residues 1-21 (MERAMEQLNRLTRSLRRARTV). ANK repeat units follow at residues 23–55 (LPED…NSKF), 64–93 (VKRS…NPNY), 97–126 (SGCT…DVNI), 130–159 (EGLT…DVDV), 163–192 (MGQT…DINR), 196–226 (SGAT…YLPD), and 228–253 (NGVT…QYHP). Residues 398 to 433 (QDQEAPSLSAFEPPGPGSYESLPPGPGDSKPEVLAG) are disordered. An HECT domain is found at 574–909 (NCAKLKQGIA…HCGSYGYTMA (336 aa)). Catalysis depends on cysteine 876, which acts as the Glycyl thioester intermediate.

Homodimer. The homodimer is autoinhibited and stabilized by its N-terminal helix. Interacts with RAB1 (RAB1A, RAB1B or RAB1C), RAB4 (RAB4A or RAB4B) and RAB11 (RAB11A or RAB11B); in a GTP-dependent manner. Interacts with the 26S proteasomal complex through the 20S core proteasomal subunit. Interacts with RARB. Post-translationally, autoubiquitinated.

The protein localises to the golgi apparatus. It localises to the golgi stack membrane. The protein resides in the cytoplasm. It is found in the endoplasmic reticulum. The enzyme catalyses S-ubiquitinyl-[E2 ubiquitin-conjugating enzyme]-L-cysteine + [acceptor protein]-L-lysine = [E2 ubiquitin-conjugating enzyme]-L-cysteine + N(6)-ubiquitinyl-[acceptor protein]-L-lysine.. It functions in the pathway protein modification; protein ubiquitination. Sterically autoinhibited in its dimeric state. Its function is as follows. E3 ubiquitin-protein ligase involved in Golgi membrane fusion and regulation of small GTPases. Acts as a regulator of Golgi membrane dynamics during the cell cycle: recruited to Golgi membrane by Rab proteins and regulates postmitotic Golgi membrane fusion. Acts by mediating ubiquitination during mitotic Golgi disassembly, ubiquitination serving as a signal for Golgi reassembly later, after cell division. Specifically binds GTP-bound RAC1, mediating ubiquitination and subsequent degradation of active RAC1, thereby playing a role in host defense against pathogens. May also act as a transcription regulator via its interaction with RARB. This chain is E3 ubiquitin-protein ligase HACE1 (Hace1), found in Mus musculus (Mouse).